Here is a 329-residue protein sequence, read N- to C-terminus: N-acetyl-gamma-glutamyl-phosphate reductase (329 aa).

The active site involves Cys-155.

Belongs to the NAGSA dehydrogenase family. Type 1 subfamily.

The protein localises to the cytoplasm. It carries out the reaction N-acetyl-L-glutamate 5-semialdehyde + phosphate + NADP(+) = N-acetyl-L-glutamyl 5-phosphate + NADPH + H(+). Its pathway is amino-acid biosynthesis; L-arginine biosynthesis; N(2)-acetyl-L-ornithine from L-glutamate: step 3/4. In terms of biological role, catalyzes the NADPH-dependent reduction of N-acetyl-5-glutamyl phosphate to yield N-acetyl-L-glutamate 5-semialdehyde. The polypeptide is N-acetyl-gamma-glutamyl-phosphate reductase (Shewanella piezotolerans (strain WP3 / JCM 13877)).